A 61-amino-acid chain; its full sequence is Small ribosomal subunit protein uS14 (61 aa).

Residues C24, C27, C40, and C43 each coordinate Zn(2+).

This sequence belongs to the universal ribosomal protein uS14 family. Zinc-binding uS14 subfamily. As to quaternary structure, part of the 30S ribosomal subunit. Contacts proteins S3 and S10. The cofactor is Zn(2+).

Binds 16S rRNA, required for the assembly of 30S particles and may also be responsible for determining the conformation of the 16S rRNA at the A site. This Streptococcus pyogenes serotype M49 (strain NZ131) protein is Small ribosomal subunit protein uS14.